Reading from the N-terminus, the 78-residue chain is Large ribosomal subunit protein bL28 (78 aa).

The segment at methionine 1 to lysine 22 is disordered.

Belongs to the bacterial ribosomal protein bL28 family.

This Saccharophagus degradans (strain 2-40 / ATCC 43961 / DSM 17024) protein is Large ribosomal subunit protein bL28.